A 173-amino-acid polypeptide reads, in one-letter code: Crossover junction endodeoxyribonuclease RuvC (173 aa).

Catalysis depends on residues Asp8, Glu67, and Asp139. 3 residues coordinate Mg(2+): Asp8, Glu67, and Asp139.

It belongs to the RuvC family. Homodimer which binds Holliday junction (HJ) DNA. The HJ becomes 2-fold symmetrical on binding to RuvC with unstacked arms; it has a different conformation from HJ DNA in complex with RuvA. In the full resolvosome a probable DNA-RuvA(4)-RuvB(12)-RuvC(2) complex forms which resolves the HJ. Mg(2+) serves as cofactor.

It localises to the cytoplasm. It carries out the reaction Endonucleolytic cleavage at a junction such as a reciprocal single-stranded crossover between two homologous DNA duplexes (Holliday junction).. The RuvA-RuvB-RuvC complex processes Holliday junction (HJ) DNA during genetic recombination and DNA repair. Endonuclease that resolves HJ intermediates. Cleaves cruciform DNA by making single-stranded nicks across the HJ at symmetrical positions within the homologous arms, yielding a 5'-phosphate and a 3'-hydroxyl group; requires a central core of homology in the junction. The consensus cleavage sequence is 5'-(A/T)TT(C/G)-3'. Cleavage occurs on the 3'-side of the TT dinucleotide at the point of strand exchange. HJ branch migration catalyzed by RuvA-RuvB allows RuvC to scan DNA until it finds its consensus sequence, where it cleaves and resolves the cruciform DNA. The polypeptide is Crossover junction endodeoxyribonuclease RuvC (Salmonella arizonae (strain ATCC BAA-731 / CDC346-86 / RSK2980)).